A 270-amino-acid polypeptide reads, in one-letter code: Monofunctional glycosyltransferase (270 aa).

The interval 1-35 is disordered; that stretch reads MKRSDRYKTYNKPNDSNDSNQLHHNTYFKPVNKPQ. Polar residues predominate over residues 11–24; it reads NKPNDSNDSNQLHH. The helical transmembrane segment at 47-67 threads the bilayer; it reads LLIPILIIIGIIIGVMYALSL.

It belongs to the glycosyltransferase 51 family.

Its subcellular location is the cell membrane. The enzyme catalyses [GlcNAc-(1-&gt;4)-Mur2Ac(oyl-L-Ala-gamma-D-Glu-L-Lys-D-Ala-D-Ala)](n)-di-trans,octa-cis-undecaprenyl diphosphate + beta-D-GlcNAc-(1-&gt;4)-Mur2Ac(oyl-L-Ala-gamma-D-Glu-L-Lys-D-Ala-D-Ala)-di-trans,octa-cis-undecaprenyl diphosphate = [GlcNAc-(1-&gt;4)-Mur2Ac(oyl-L-Ala-gamma-D-Glu-L-Lys-D-Ala-D-Ala)](n+1)-di-trans,octa-cis-undecaprenyl diphosphate + di-trans,octa-cis-undecaprenyl diphosphate + H(+). Its pathway is cell wall biogenesis; peptidoglycan biosynthesis. Peptidoglycan polymerase that catalyzes glycan chain elongation using lipid-linked disaccharide-pentapeptide as the substrate. In Staphylococcus saprophyticus subsp. saprophyticus (strain ATCC 15305 / DSM 20229 / NCIMB 8711 / NCTC 7292 / S-41), this protein is Monofunctional glycosyltransferase.